We begin with the raw amino-acid sequence, 317 residues long: Large ribosomal subunit protein uL10 (317 aa).

The disordered stretch occupies residues 286-317 (AGAGAAAEKKEEAKKEESESEEDDDMGFGLFD). Residues 292-302 (AEKKEEAKKEE) are compositionally biased toward basic and acidic residues.

The protein belongs to the universal ribosomal protein uL10 family. As to quaternary structure, P0 forms a pentameric complex by interaction with dimers of P1 and P2. Post-translationally, phosphorylated.

Ribosomal protein P0 is the functional equivalent of E.coli protein L10. The protein is Large ribosomal subunit protein uL10 (RpLP0) of Ceratitis capitata (Mediterranean fruit fly).